Consider the following 318-residue polypeptide: Transaldolase (318 aa).

Lysine 132 serves as the catalytic Schiff-base intermediate with substrate.

Belongs to the transaldolase family. Type 1 subfamily. In terms of assembly, homodimer.

Its subcellular location is the cytoplasm. It carries out the reaction D-sedoheptulose 7-phosphate + D-glyceraldehyde 3-phosphate = D-erythrose 4-phosphate + beta-D-fructose 6-phosphate. It participates in carbohydrate degradation; pentose phosphate pathway; D-glyceraldehyde 3-phosphate and beta-D-fructose 6-phosphate from D-ribose 5-phosphate and D-xylulose 5-phosphate (non-oxidative stage): step 2/3. Its function is as follows. Transaldolase is important for the balance of metabolites in the pentose-phosphate pathway. This chain is Transaldolase, found in Allorhizobium ampelinum (strain ATCC BAA-846 / DSM 112012 / S4) (Agrobacterium vitis (strain S4)).